Consider the following 219-residue polypeptide: uncharacterized protein (219 aa).

Residues 42–71 (RQPRVVPVTSSDPEVVDDEDDEDQSDDSDE) form a disordered region. Residues 45–54 (RVVPVTSSDP) show a composition bias toward low complexity. The segment covering 55–71 (EVVDDEDDEDQSDDSDE) has biased composition (acidic residues).

This is an uncharacterized protein from Dryophytes versicolor (chameleon treefrog).